Here is a 782-residue protein sequence, read N- to C-terminus: Ribosome biogenesis protein ERB1 (782 aa).

The segment covering 1 to 11 (MSVNSRKRKVA) has biased composition (basic residues). Positions 1–120 (MSVNSRKRKV…LEGEEDESLK (120 aa)) are disordered. 2 stretches are compositionally biased toward acidic residues: residues 39-51 (DESEDDQDAEDTD) and 59-75 (LSDEDFEDEEDSGDEAE). Over residues 82–92 (RNLNTSGGSQQ) the composition is skewed to polar residues. A compositionally biased stretch (acidic residues) spans 106–117 (GADGELEGEEDE). WD repeat units lie at residues 432 to 471 (GQEGRVRCVSVDPQGIFVASGGDDGYVRIWELLTGRQVWN) and 475 to 516 (SDEE…PDVE). The segment at 533–556 (KPSTAANGEAPKQSPGKWSRPGSR) is disordered. WD repeat units follow at residues 612 to 652 (RLKG…KILQ), 653 to 692 (PGAKWISSIDVHPGGDNIIVGTYDKRLLWHDLDLSNKPYK), 696 to 736 (FHKE…DLME), and 752 to 782 (KSRLGVMDLDWHPREPWCVSAGADGTLRLWN).

Belongs to the WD repeat BOP1/ERB1 family. Component of the NOP7 complex, composed of ERB1, NOP7 and YTM1. The complex is held together by ERB1, which interacts with NOP7 via its N-terminal domain and with YTM1 via a high-affinity interaction between the seven-bladed beta-propeller domains of the 2 proteins. The NOP7 complex associates with the 66S pre-ribosome.

It is found in the nucleus. It localises to the nucleolus. The protein resides in the nucleoplasm. In terms of biological role, component of the NOP7 complex, which is required for maturation of the 25S and 5.8S ribosomal RNAs and formation of the 60S ribosome. This chain is Ribosome biogenesis protein ERB1, found in Phaeosphaeria nodorum (strain SN15 / ATCC MYA-4574 / FGSC 10173) (Glume blotch fungus).